The sequence spans 283 residues: Bifunctional protein FolD (283 aa).

NADP(+) is bound by residues 165 to 167 (GRS) and serine 190.

It belongs to the tetrahydrofolate dehydrogenase/cyclohydrolase family. As to quaternary structure, homodimer.

The enzyme catalyses (6R)-5,10-methylene-5,6,7,8-tetrahydrofolate + NADP(+) = (6R)-5,10-methenyltetrahydrofolate + NADPH. It catalyses the reaction (6R)-5,10-methenyltetrahydrofolate + H2O = (6R)-10-formyltetrahydrofolate + H(+). It participates in one-carbon metabolism; tetrahydrofolate interconversion. Catalyzes the oxidation of 5,10-methylenetetrahydrofolate to 5,10-methenyltetrahydrofolate and then the hydrolysis of 5,10-methenyltetrahydrofolate to 10-formyltetrahydrofolate. The chain is Bifunctional protein FolD from Methylibium petroleiphilum (strain ATCC BAA-1232 / LMG 22953 / PM1).